Here is a 367-residue protein sequence, read N- to C-terminus: Ribosomal lysine N-methyltransferase 5 (367 aa).

The disordered stretch occupies residues 55 to 74 (EGGRKKKRVRRRNKASSVEE). Residues 58 to 68 (RKKKRVRRRNK) are compositionally biased toward basic residues. Residues tryptophan 110, 170-172 (GAG), aspartate 192, tryptophan 256, and methionine 288 each bind S-adenosyl-L-methionine.

This sequence belongs to the class I-like SAM-binding methyltransferase superfamily. RKM5 family.

In terms of biological role, S-adenosyl-L-methionine-dependent protein-lysine N-methyltransferase that monomethylates 60S ribosomal protein L1 (RPL1A and RPL1B) at 'Lys-46'. The polypeptide is Ribosomal lysine N-methyltransferase 5 (RKM5) (Saccharomyces cerevisiae (strain Lalvin EC1118 / Prise de mousse) (Baker's yeast)).